Consider the following 399-residue polypeptide: uncharacterized protein (399 aa).

This sequence belongs to the NADH:flavin oxidoreductase/NADH oxidase family. In terms of assembly, directly interacts with lipoylated GcvH-L (SpyM50867).

This is an uncharacterized protein from Streptococcus pyogenes serotype M5 (strain Manfredo).